The following is a 797-amino-acid chain: Inactive dipeptidyl peptidase 10 (797 aa).

Residues 1 to 28 (MKQEQQPTPGARATQSQPADQELGSNSP) form a disordered region. Over 1–34 (MKQEQQPTPGARATQSQPADQELGSNSPPQRNWK) the chain is Cytoplasmic. A helical; Signal-anchor for type II membrane protein membrane pass occupies residues 35–55 (GIAIALLVILVVCSLITMSVI). Topologically, residues 56-797 (LLTPDELTNS…VLPQEPEEDE (742 aa)) are extracellular. Residues Asn64, Asn91, Asn112, and Asn120 are each glycosylated (N-linked (GlcNAc...) asparagine). Phosphotyrosine occurs at positions 139 and 144. N-linked (GlcNAc...) asparagine glycosylation is found at Asn258, Asn343, Asn518, and Asn749.

The protein belongs to the peptidase S9B family. DPPIV subfamily. As to quaternary structure, may form oligomers. Interacts with KCND1 and KCND2. N-glycosylation is important for cell surface expression, specially at Asn-258, which is crucial. As to expression, detected in brain cortex (at protein level). Expressed in the brain, predominantly by neurons and not by glia.

The protein resides in the cell membrane. In terms of biological role, promotes cell surface expression of the potassium channel KCND2. Modulates the activity and gating characteristics of the potassium channel KCND2. Has no dipeptidyl aminopeptidase activity. The polypeptide is Inactive dipeptidyl peptidase 10 (Dpp10) (Mus musculus (Mouse)).